A 451-amino-acid polypeptide reads, in one-letter code: Tetraspanin-14 (451 aa).

At 1–56 (MPHRAPRRFMKTAPGACDWEQCLLMGSGEPTRARAVVSSSHKQRKPRQEISACLKW) the chain is on the cytoplasmic side. The Basolateral membrane targeting motif lies at 20-24 (EQCLL). Residues 57–77 (LVFLLNSIVFLVGVGILALGV) traverse the membrane as a helical segment. The Extracellular portion of the chain corresponds to 78–96 (YLFIKDFREVKLVDIILNP). Residues 97-117 (AILISIFGFSICVVSFFGFMG) traverse the membrane as a helical segment. Topologically, residues 118–130 (ALRDNIFLLKCFA) are cytoplasmic. A helical transmembrane segment spans residues 131–151 (ACVFLSYILVVAVTLVFFTLF). At 152-285 (YTDTTEGLSA…QPLRTLFESH (134 aa)) the chain is on the extracellular side. Residues Asn205 and Asn211 are each glycosylated (N-linked (GlcNAc...) asparagine). Residues 286 to 306 (AVHVGAFVALLIVPVCISVCL) form a helical membrane-spanning segment. At 307-451 (TNILAKQVDH…TDLVPQKSKS (145 aa)) the chain is on the cytoplasmic side. The tract at residues 328–451 (NDRRRKRDHN…TDLVPQKSKS (124 aa)) is disordered. Positions 366–376 (PDIPPPLPPIE) are enriched in pro residues. Over residues 410 to 434 (ATTTRTPPAAAGPAPTPQATTTNRT) the composition is skewed to low complexity. Polar residues predominate over residues 435 to 444 (HQWVLQQTDL).

Belongs to the tetraspanin (TM4SF) family. As to expression, expressed in the germline, particularly in sperm cells. In terms of tissue distribution, expressed in the germline (particularly in sperm cells), anterior sensory cilia, hypodermis and vulva (at protein level). Expressed in the pharynx, hypodermis and vulva (at protein level).

Its subcellular location is the cell membrane. The protein resides in the cytoplasmic vesicle membrane. It is found in the endosome membrane. The protein localises to the early endosome membrane. It localises to the late endosome membrane. Its subcellular location is the recycling endosome membrane. The protein resides in the apical cell membrane. It is found in the basolateral cell membrane. Functionally, functions redundantly with tsp-12 to regulate cell surface levels of the BMP type II receptor daf-4 (but not BMP type I receptor sma-6), probably by regulating endosomal sorting and recycling of receptors, preventing their targeting to degradative lysosomes. Together with tsp-12, regulates cell fate specification in the postembryonic mesodermal M lineage, body size, male development and vulva development, probably by positively modulating BMP-like Sma/Mab signaling. Together with tsp-12 involved in maintaining the structural and functional integrity of the endosomal network. Together with tsp-12, probably acts by modulating the activation of glp-1, Notch-like receptor, to regulate germline maturation. Functions redundantly with tsp-12 to regulate cell fate specification in the postembryonic mesodermal M lineage, body size, embryonic and vulva development. Its function is as follows. Functions redundantly with tsp-12 to regulate cell fate specification in the postembryonic mesodermal M lineage. Likely plays a complementary role in mesodermal development with tsp-14 isoform a, but may be more critical. This is Tetraspanin-14 from Caenorhabditis elegans.